Consider the following 255-residue polypeptide: Ornithine decarboxylase antizyme (255 aa).

Belongs to the ODC antizyme family. Interacts with ODC and thereby sterically blocks ODC homodimerization.

Functionally, ornithine decarboxylase (ODC) antizyme protein that negatively regulates ODC activity and intracellular polyamine biosynthesis in response to increased intracellular polyamine levels. Binds to ODC monomers, inhibiting the assembly of the functional ODC homodimer, and targets the monomers for ubiquitin-independent proteolytic destruction by the 26S proteasome. The sequence is that of Ornithine decarboxylase antizyme (OAZ1) from Eremothecium gossypii (strain ATCC 10895 / CBS 109.51 / FGSC 9923 / NRRL Y-1056) (Yeast).